The following is a 129-amino-acid chain: Small ribosomal subunit protein uS11 (129 aa).

This sequence belongs to the universal ribosomal protein uS11 family. As to quaternary structure, part of the 30S ribosomal subunit. Interacts with proteins S7 and S18. Binds to IF-3.

Its function is as follows. Located on the platform of the 30S subunit, it bridges several disparate RNA helices of the 16S rRNA. Forms part of the Shine-Dalgarno cleft in the 70S ribosome. This chain is Small ribosomal subunit protein uS11, found in Phenylobacterium zucineum (strain HLK1).